A 227-amino-acid chain; its full sequence is Ribose-5-phosphate isomerase A (227 aa).

Residues 26-29, 82-85, and 95-98 contribute to the substrate site; these read TGST, DGAD, and KGGG. E104 (proton acceptor) is an active-site residue. Substrate is bound at residue K122.

The protein belongs to the ribose 5-phosphate isomerase family. As to quaternary structure, homodimer.

It catalyses the reaction aldehydo-D-ribose 5-phosphate = D-ribulose 5-phosphate. It participates in carbohydrate degradation; pentose phosphate pathway; D-ribose 5-phosphate from D-ribulose 5-phosphate (non-oxidative stage): step 1/1. Functionally, catalyzes the reversible conversion of ribose-5-phosphate to ribulose 5-phosphate. This chain is Ribose-5-phosphate isomerase A, found in Streptococcus pyogenes serotype M5 (strain Manfredo).